Consider the following 358-residue polypeptide: MTQPNLNIVPFVSVDHMMKLVLRVGVETFLKELAGYVEEDFRRWQNFDKTPRVASHSKEGVIELMPTSDGTLYGFKYVNGHPKNTRDGLQTVTAFGVLANVGSGYPMLLTEMTILTALRTAATSAVAAKHLAPKNARTMAIIGNGAQSEFQALAFKAILGVDKLRLYDLDPQATAKCIRNLQGAGFDIVACKSVEEAVEGADIITTVTADKANATILTDNMVGAGVHINAVGGDCPGKTELHGDILRRSDIFVEYPPQTRIEGEIQQLPEDYPVNELWEVITGRIAGRKDARQITLFDSVGFATEDFSALRYVRDKLKDTGLYEQLDLLADPDEPRDLYGMLLRHEKLLQSESTKPAA.

Residues arginine 52 and lysine 76 each contribute to the L-ornithine site. NAD(+)-binding positions include threonine 91, arginine 119, 146–147, aspartate 168, threonine 208, 231–234, lysine 238, and serine 299; these read AQ and VGGD. Arginine 119 lines the L-ornithine pocket. Aspartate 234 is a binding site for L-ornithine. Aspartate 234 serves as the catalytic Proton donor/acceptor. Residue valine 300 coordinates L-ornithine.

It belongs to the ornithine cyclodeaminase/mu-crystallin family. Requires NAD(+) as cofactor.

The enzyme catalyses L-ornithine = L-proline + NH4(+). It participates in amino-acid biosynthesis; L-proline biosynthesis; L-proline from L-ornithine: step 1/1. Its function is as follows. Catalyzes the conversion of L-ornithine into L-proline with release of ammonia. The chain is Ornithine cyclodeaminase from Brucella suis biovar 1 (strain 1330).